A 368-amino-acid polypeptide reads, in one-letter code: CST complex subunit STN1 (368 aa).

Residues 1–185 (MQPGSSRCEE…KIYDQPFRSS (185 aa)) form an interaction with CTC1 region. A DNA-binding region (OB) is located at residues 57–155 (VDVLGTVVGV…EIHATAYYKV (99 aa)). Winged helix-turn-helix (wHTH) stretches follow at residues 191 to 295 (EALS…YVTR) and 296 to 368 (EDKD…YTAF).

Belongs to the STN1 family. In terms of assembly, component of the CST complex, composed of TEN1/C17orf106, CTC1/C17orf68 and STN1; in the complex interacts directly with TEN1 and CTC1. Interacts with ACD/TPP1, POT1 and POLA1.

Its subcellular location is the nucleus. The protein resides in the chromosome. It localises to the telomere. In terms of biological role, component of the CST complex proposed to act as a specialized replication factor promoting DNA replication under conditions of replication stress or natural replication barriers such as the telomere duplex. The CST complex binds single-stranded DNA with high affinity in a sequence-independent manner, while isolated subunits bind DNA with low affinity by themselves. Initially the CST complex has been proposed to protect telomeres from DNA degradation. However, the CST complex has been shown to be involved in several aspects of telomere replication. The CST complex inhibits telomerase and is involved in telomere length homeostasis; it is proposed to bind to newly telomerase-synthesized 3' overhangs and to terminate telomerase action implicating the association with the ACD:POT1 complex thus interfering with its telomerase stimulation activity. The CST complex is also proposed to be involved in fill-in synthesis of the telomeric C-strand probably implicating recruitment and activation of DNA polymerase alpha. The CST complex facilitates recovery from many forms of exogenous DNA damage; seems to be involved in the re-initiation of DNA replication at repaired forks and/or dormant origins. Required for efficicient replication of the duplex region of the telomere. Promotes efficient replication of lagging-strand telomeres. Promotes general replication start following replication-fork stalling implicating new origin firing. May be in involved in C-strand fill-in during late S/G2 phase independent of its role in telomere duplex replication. This Macaca fascicularis (Crab-eating macaque) protein is CST complex subunit STN1.